A 113-amino-acid polypeptide reads, in one-letter code: MNFYLLLASSILCALIVFWKYRRFQRNTGEMSSNSTALALVRPSSSGLINSNTDNNLAVYDLSRDILNNFPHSIARQKRILVNLSMVENKLVELEHTLLSKGFRGASPHRKST.

The Cytoplasmic segment spans residues 1–3 (MNF). A helical; Signal-anchor for type II membrane protein transmembrane segment spans residues 4–21 (YLLLASSILCALIVFWKY). Residues 22–113 (RRFQRNTGEM…RGASPHRKST (92 aa)) are Extracellular-facing. An N-linked (GlcNAc...) asparagine glycan is attached at Asn83.

In terms of tissue distribution, specifically expressed in testis. Expressed by cancer cell lines.

Its subcellular location is the cell membrane. The sequence is that of Kita-kyushu lung cancer antigen 1 (CT83) from Homo sapiens (Human).